Consider the following 277-residue polypeptide: Histone-lysine N-methyltransferase set-17 (277 aa).

In terms of domain architecture, SET spans 135-246; it reads FRIEESKLPN…INQELLVWYG (112 aa). An S-adenosyl-L-methionine-binding site is contributed by Y245.

The protein belongs to the class V-like SAM-binding methyltransferase superfamily. In terms of tissue distribution, expressed in the germline. Predominantly expressed in primary spermatocytes. Also expressed in the oocyte-producing germline of hermaphrodites.

Its subcellular location is the nucleus. The catalysed reaction is N(6)-methyl-L-lysyl(4)-[histone H3] + S-adenosyl-L-methionine = N(6),N(6)-dimethyl-L-lysyl(4)-[histone H3] + S-adenosyl-L-homocysteine + H(+). The enzyme catalyses L-lysyl(4)-[histone H3] + S-adenosyl-L-methionine = N(6)-methyl-L-lysyl(4)-[histone H3] + S-adenosyl-L-homocysteine + H(+). In terms of biological role, histone methyltransferase that specifically mono- and di-methylates 'Lys-4' of histone H3 in vitro. Does not tri-methylate 'Lys-4' of histone H3 in vitro. Promotes spermatid development and fertility by positively regulating the transcription of spermatocyte-specific genes in primary spermatocytes. Together with spr-5, required for transgenerational fertility. This Caenorhabditis elegans protein is Histone-lysine N-methyltransferase set-17.